The primary structure comprises 262 residues: 5'-nucleotidase SurE (262 aa).

Residues Asp-8, Asp-9, Ser-40, and Asn-92 each contribute to the a divalent metal cation site.

It belongs to the SurE nucleotidase family. A divalent metal cation is required as a cofactor.

Its subcellular location is the cytoplasm. The catalysed reaction is a ribonucleoside 5'-phosphate + H2O = a ribonucleoside + phosphate. In terms of biological role, nucleotidase that shows phosphatase activity on nucleoside 5'-monophosphates. The protein is 5'-nucleotidase SurE of Xylella fastidiosa (strain 9a5c).